Reading from the N-terminus, the 408-residue chain is Argininosuccinate synthase (408 aa).

Residues 12 to 20 and A39 contribute to the ATP site; that span reads AYSGGLDTS. Residues Y92 and S97 each coordinate L-citrulline. Position 122 (G122) interacts with ATP. The L-aspartate site is built by T124, N128, and D129. N128 serves as a coordination point for L-citrulline. L-citrulline is bound by residues R132, S183, S192, E268, and Y280.

The protein belongs to the argininosuccinate synthase family. Type 1 subfamily. As to quaternary structure, homotetramer.

It localises to the cytoplasm. It catalyses the reaction L-citrulline + L-aspartate + ATP = 2-(N(omega)-L-arginino)succinate + AMP + diphosphate + H(+). It functions in the pathway amino-acid biosynthesis; L-arginine biosynthesis; L-arginine from L-ornithine and carbamoyl phosphate: step 2/3. This is Argininosuccinate synthase from Caulobacter vibrioides (strain ATCC 19089 / CIP 103742 / CB 15) (Caulobacter crescentus).